Here is a 74-residue protein sequence, read N- to C-terminus: Defensin-like protein P322 (74 aa).

The first 19 residues, 1–19 (MRFFATFFLLAMLVVATKM), serve as a signal peptide directing secretion. Intrachain disulfides connect cysteine 30–cysteine 74, cysteine 41–cysteine 61, cysteine 47–cysteine 68, and cysteine 51–cysteine 70.

This sequence belongs to the DEFL family. Protease inhibitor I18 (RTI/MTI-2) subfamily. Tuber.

Its subcellular location is the secreted. This Solanum tuberosum (Potato) protein is Defensin-like protein P322.